A 72-amino-acid polypeptide reads, in one-letter code: Beta-defensin 104A (72 aa).

The first 22 residues, 1 to 22 (MRRLVLLLAISLLLYQDLPVRS), serve as a signal peptide directing secretion. Disulfide bonds link cysteine 30/cysteine 57, cysteine 37/cysteine 51, and cysteine 41/cysteine 58.

Belongs to the beta-defensin family.

Its subcellular location is the secreted. Its function is as follows. Has antimicrobial activity. In Gorilla gorilla gorilla (Western lowland gorilla), this protein is Beta-defensin 104A (DEFB104A).